A 149-amino-acid polypeptide reads, in one-letter code: Small ribosomal subunit protein bS6 (149 aa).

The tract at residues 93–149 (VGKHEEGPSAMMQKRDRDDRPRRDGDRPDRGGFGDRGPRPDRGDRDDRPRRPREDRA) is disordered. Over residues 94-149 (GKHEEGPSAMMQKRDRDDRPRRDGDRPDRGGFGDRGPRPDRGDRDDRPRRPREDRA) the composition is skewed to basic and acidic residues.

This sequence belongs to the bacterial ribosomal protein bS6 family.

Functionally, binds together with bS18 to 16S ribosomal RNA. The chain is Small ribosomal subunit protein bS6 from Rhizobium meliloti (strain 1021) (Ensifer meliloti).